Reading from the N-terminus, the 82-residue chain is Vejovine (82 aa).

The signal sequence occupies residues 1–22 (MNAKTLFVVFLIGMLVTEQVEA). Positions 70 to 82 (MTLDEIVDAMYYD) are excised as a propeptide.

The protein belongs to the non-disulfide-bridged peptide (NDBP) superfamily. Long chain multifunctional peptide (group 2) family. As to expression, expressed by the venom gland.

The protein resides in the secreted. The protein localises to the target cell membrane. Functionally, displays significant potent antimicrobial activity against clinical isolates of Gram-negative multidrug resistant strains of E.coli, P.aeruginosa and A.baumanii with MIC values as low as 4.4 uM. Additionally, it displays low cytolytic and hemolytic activity against human erythrocytes reaching 50% hemolysis at 100 uM. The sequence is that of Vejovine from Vaejovis mexicanus (Mexican scorpion).